We begin with the raw amino-acid sequence, 402 residues long: Plasminogen activator inhibitor 1 (402 aa).

A signal peptide spans 1-23 (MRMSPVFACLALGLALIFGEGSA). 3 N-linked (GlcNAc...) asparagine glycosylation sites follow: asparagine 232, asparagine 288, and asparagine 352.

Belongs to the serpin family. Forms a heterodimer with TMPRSS7. Interacts with VTN. Binds LRP1B; binding is followed by internalization and degradation. Interacts with PPP1CB. In complex with PLAU/uPA, interacts with PLAUR/uPAR. Interacts with SORL1 and LRP1, either alone or in complex with PLAU; these interactions are abolished in the presence of LRPAP1/RAP. The ternary complex composed of PLAUR-PLAU-PAI1 also interacts with SORL1. Interacts with PLAT/tPA. Also interacts with SORL1, when complexed to PLAT/tPA. In terms of tissue distribution, vascular endothelial cells may be the primary site of synthesis of plasma PAI1.

Its subcellular location is the secreted. In terms of biological role, serine protease inhibitor. Inhibits TMPRSS7. Is a primary inhibitor of tissue-type plasminogen activator (PLAT) and urokinase-type plasminogen activator (PLAU). As PLAT inhibitor, it is required for fibrinolysis down-regulation and is responsible for the controlled degradation of blood clots. As PLAU inhibitor, it is involved in the regulation of cell adhesion and spreading. Acts as a regulator of cell migration, independently of its role as protease inhibitor. It is required for stimulation of keratinocyte migration during cutaneous injury repair. It is involved in cellular and replicative senescence. Plays a role in alveolar type 2 cells senescence in the lung. Is involved in the regulation of cementogenic differentiation of periodontal ligament stem cells, and regulates odontoblast differentiation and dentin formation during odontogenesis. This Bos taurus (Bovine) protein is Plasminogen activator inhibitor 1 (SERPINE1).